Here is a 294-residue protein sequence, read N- to C-terminus: Protoheme IX farnesyltransferase (294 aa).

The next 9 membrane-spanning stretches (helical) occupy residues 24 to 44 (VVLLMLLTVIVGMYLAAPGWV), 48 to 68 (LIAFTLLGIGLCAGSAAAINH), 96 to 116 (ALWFAVIIGLMGLSLLILFVN), 118 to 138 (LTALLTFVTLIGYAGVYTGYL), 145 to 165 (NIVIGGLAGAAPPLLGWTAVT), 172 to 192 (ALLLVLIIFTWTPPHFWALAI), 224 to 244 (VLLLVVSLLPFVVSMSGWIYL), 245 to 265 (LGALVLGIRFLVWAHKLYFTD), and 268 to 288 (VVAMQTFRFSILYLMLLFVFL).

This sequence belongs to the UbiA prenyltransferase family. Protoheme IX farnesyltransferase subfamily.

Its subcellular location is the cell inner membrane. It catalyses the reaction heme b + (2E,6E)-farnesyl diphosphate + H2O = Fe(II)-heme o + diphosphate. It participates in porphyrin-containing compound metabolism; heme O biosynthesis; heme O from protoheme: step 1/1. Functionally, converts heme B (protoheme IX) to heme O by substitution of the vinyl group on carbon 2 of heme B porphyrin ring with a hydroxyethyl farnesyl side group. The chain is Protoheme IX farnesyltransferase from Legionella pneumophila (strain Corby).